The following is a 392-amino-acid chain: Phosphoglycerate kinase (392 aa).

Substrate-binding positions include 21–23 (DLN), Arg-36, 59–62 (HLGR), Arg-113, and Arg-146. Residues Lys-197, Glu-319, and 345–348 (GGDT) each bind ATP.

It belongs to the phosphoglycerate kinase family. Monomer.

The protein resides in the cytoplasm. It carries out the reaction (2R)-3-phosphoglycerate + ATP = (2R)-3-phospho-glyceroyl phosphate + ADP. It functions in the pathway carbohydrate degradation; glycolysis; pyruvate from D-glyceraldehyde 3-phosphate: step 2/5. This is Phosphoglycerate kinase from Nitrosococcus oceani (strain ATCC 19707 / BCRC 17464 / JCM 30415 / NCIMB 11848 / C-107).